Reading from the N-terminus, the 1479-residue chain is ESX secretion system protein EccC (1479 aa).

Topologically, residues 1 to 235 (MSQLWVLYET…SQEGDGDPRG (235 aa)) are cytoplasmic. Residues 236–256 (LWLMVLPPVMMLLVIGAVALI) form a helical membrane-spanning segment. Residues 257–259 (QPR) lie on the Extracellular side of the membrane. A helical transmembrane segment spans residues 260-280 (GVFIMISIAMFATTIVTSTAQ). At 281 to 1479 (YMREKKARQM…DQKIQIPKVE (1199 aa)) the chain is on the cytoplasmic side. The stretch at 291–321 (RKEKRRRIYTNYLEQKREELQALSEKQRNVL) forms a coiled coil. 2 consecutive FtsK domains span residues 652–848 (NDVV…NDSK) and 984–1168 (QSDY…SEKF). 672–679 (GTTGSGKS) lines the ATP pocket. Glutamate 785 is a catalytic residue. Residues 1004–1009 (GYGKST), asparagine 1036, aspartate 1105, isoleucine 1197, aspartate 1206, 1287–1291 (RKGKT), and isoleucine 1475 each bind ATP. In terms of domain architecture, FtsK 3 spans 1267-1444 (VRPVAINMRT…ILVTKKSEQS (178 aa)).

As to quaternary structure, whole protein oligomerizes in native gels. Part of the ESX / type VII secretion system (T7SS), which is composed of cytosolic and membrane components. The ESX membrane complex is composed of EccB, EccC and EccD.

The protein resides in the cell membrane. With respect to regulation, esxB binding to the third FtsK domain causes multimerization; a subsequent unknown step relieves the allosteric inhibition of linker 2 on FtsK domain 1, activating the ATPase activity. Functionally, part of the ESX specialized secretion system, which exports proteins from the cell including EsxA (ESAT-6) and EsxB (CFP-10). Might be the translocase subunit. Probably only the first FtsK domain can hydrolyze ATP. The sequence is that of ESX secretion system protein EccC from Geobacillus thermodenitrificans (strain NG80-2).